The sequence spans 193 residues: ATP synthase subunit b 2 (193 aa).

The helical transmembrane segment at Ile44–Pro64 threads the bilayer.

This sequence belongs to the ATPase B chain family. In terms of assembly, F-type ATPases have 2 components, F(1) - the catalytic core - and F(0) - the membrane proton channel. F(1) has five subunits: alpha(3), beta(3), gamma(1), delta(1), epsilon(1). F(0) has three main subunits: a(1), b(2) and c(10-14). The alpha and beta chains form an alternating ring which encloses part of the gamma chain. F(1) is attached to F(0) by a central stalk formed by the gamma and epsilon chains, while a peripheral stalk is formed by the delta and b chains.

The protein localises to the cell inner membrane. Functionally, f(1)F(0) ATP synthase produces ATP from ADP in the presence of a proton or sodium gradient. F-type ATPases consist of two structural domains, F(1) containing the extramembraneous catalytic core and F(0) containing the membrane proton channel, linked together by a central stalk and a peripheral stalk. During catalysis, ATP synthesis in the catalytic domain of F(1) is coupled via a rotary mechanism of the central stalk subunits to proton translocation. Component of the F(0) channel, it forms part of the peripheral stalk, linking F(1) to F(0). The b'-subunit is a diverged and duplicated form of b found in plants and photosynthetic bacteria. The polypeptide is ATP synthase subunit b 2 (atpF2) (Jannaschia sp. (strain CCS1)).